The sequence spans 504 residues: Xanthotoxol synthase (504 aa).

Residues 3–23 (PAAIFLILAIPIASVYLLFYH) form a helical membrane-spanning segment. The interval 363 to 368 (PGPLLI) is substrate specificity. Cys-444 is a binding site for heme.

The protein belongs to the cytochrome P450 family. The cofactor is heme.

Its subcellular location is the microsome membrane. The enzyme catalyses psoralen + reduced [NADPH--hemoprotein reductase] + O2 = xanthotoxol + oxidized [NADPH--hemoprotein reductase] + H2O + H(+). The catalysed reaction is 6-methoxycoumarin + reduced [NADPH--hemoprotein reductase] + O2 = scopoletin + oxidized [NADPH--hemoprotein reductase] + H2O + H(+). The protein operates within secondary metabolite biosynthesis. Its function is as follows. Involved in the biosynthesis of coumarins and furanocoumarins (FCs), natural products required for defense responses against attacks by predators with potential medical and agroindustrial usages such as anticoagulant, rodenticide and artificial vanilla substitutes. Catalyzes the conversion of psoralen into xanthotoxol and of 6-methoxycoumarin into scopoletin. Can also convert with a lower efficiency scopoletin into fraxetin and 7-methoxycoumarin into daphnetin-7-methylether, and use 7-methoxy-3-methylcoumarin as substrate. The chain is Xanthotoxol synthase from Pastinaca sativa (Wild parsnip).